Here is a 67-residue protein sequence, read N- to C-terminus: U-myrmeciitoxin(01)-Mg4a (67 aa).

Residues 1–25 (MGKVFFFVLMIAIIGSTFLIEEALG) form the signal peptide.

The protein belongs to the ant myrmeciitoxin-01 family. Homodimer; disulfide-linked. In terms of processing, contains 2 intrachain disulfide bonds (one per chain) and 1 interchain disulfide bond. Expressed by the venom gland.

It localises to the secreted. The chain is U-myrmeciitoxin(01)-Mg4a from Myrmecia gulosa (Red bulldog ant).